A 389-amino-acid polypeptide reads, in one-letter code: Nicotinate phosphoribosyltransferase (389 aa).

His216 carries the post-translational modification Phosphohistidine; by autocatalysis.

This sequence belongs to the NAPRTase family. Transiently phosphorylated on a His residue during the reaction cycle. Phosphorylation strongly increases the affinity for substrates and increases the rate of nicotinate D-ribonucleotide production. Dephosphorylation regenerates the low-affinity form of the enzyme, leading to product release.

The catalysed reaction is nicotinate + 5-phospho-alpha-D-ribose 1-diphosphate + ATP + H2O = nicotinate beta-D-ribonucleotide + ADP + phosphate + diphosphate. It functions in the pathway cofactor biosynthesis; NAD(+) biosynthesis; nicotinate D-ribonucleotide from nicotinate: step 1/1. Catalyzes the synthesis of beta-nicotinate D-ribonucleotide from nicotinate and 5-phospho-D-ribose 1-phosphate at the expense of ATP. The sequence is that of Nicotinate phosphoribosyltransferase from Ralstonia nicotianae (strain ATCC BAA-1114 / GMI1000) (Ralstonia solanacearum).